A 289-amino-acid polypeptide reads, in one-letter code: Bis(5'-nucleosyl)-tetraphosphatase, symmetrical (289 aa).

This sequence belongs to the Ap4A hydrolase family.

It catalyses the reaction P(1),P(4)-bis(5'-adenosyl) tetraphosphate + H2O = 2 ADP + 2 H(+). Hydrolyzes diadenosine 5',5'''-P1,P4-tetraphosphate to yield ADP. The sequence is that of Bis(5'-nucleosyl)-tetraphosphatase, symmetrical from Yersinia pseudotuberculosis serotype O:3 (strain YPIII).